We begin with the raw amino-acid sequence, 185 residues long: Small ribosomal subunit protein uS5 (185 aa).

The region spanning 29–92 (LEEKVVKINR…EKAKKQLVRI (64 aa)) is the S5 DRBM domain.

It belongs to the universal ribosomal protein uS5 family. As to quaternary structure, part of the 30S ribosomal subunit. Contacts proteins S4 and S8.

Its function is as follows. With S4 and S12 plays an important role in translational accuracy. Located at the back of the 30S subunit body where it stabilizes the conformation of the head with respect to the body. The polypeptide is Small ribosomal subunit protein uS5 (Aster yellows witches'-broom phytoplasma (strain AYWB)).